Here is a 227-residue protein sequence, read N- to C-terminus: Cytochrome c oxidase subunit 2 (227 aa).

M1 carries the post-translational modification N-formylmethionine. At 1-14 the chain is on the mitochondrial intermembrane side; sequence MAYPMQLGFQDATS. Residues 15–45 form a helical membrane-spanning segment; sequence PIMEELLHFHDHTLMIVFLISSLVLYIISLM. Residues 46–59 lie on the Mitochondrial matrix side of the membrane; the sequence is LTTKLTHTSTMDAQ. Residues 60 to 87 form a helical membrane-spanning segment; the sequence is EVETIWTILPAIILILIALPSLRILYMM. Residues 88-227 lie on the Mitochondrial intermembrane side of the membrane; sequence DEINNPSLTV…YFEKWSASML (140 aa). H161, C196, E198, C200, H204, and M207 together coordinate Cu cation. E198 provides a ligand contact to Mg(2+). Y218 is subject to Phosphotyrosine.

Belongs to the cytochrome c oxidase subunit 2 family. As to quaternary structure, component of the cytochrome c oxidase (complex IV, CIV), a multisubunit enzyme composed of 14 subunits. The complex is composed of a catalytic core of 3 subunits MT-CO1, MT-CO2 and MT-CO3, encoded in the mitochondrial DNA, and 11 supernumerary subunits COX4I, COX5A, COX5B, COX6A, COX6B, COX6C, COX7A, COX7B, COX7C, COX8 and NDUFA4, which are encoded in the nuclear genome. The complex exists as a monomer or a dimer and forms supercomplexes (SCs) in the inner mitochondrial membrane with NADH-ubiquinone oxidoreductase (complex I, CI) and ubiquinol-cytochrome c oxidoreductase (cytochrome b-c1 complex, complex III, CIII), resulting in different assemblies (supercomplex SCI(1)III(2)IV(1) and megacomplex MCI(2)III(2)IV(2)). Found in a complex with TMEM177, COA6, COX18, COX20, SCO1 and SCO2. Interacts with TMEM177 in a COX20-dependent manner. Interacts with COX20. Interacts with COX16. Cu cation serves as cofactor.

The protein resides in the mitochondrion inner membrane. The enzyme catalyses 4 Fe(II)-[cytochrome c] + O2 + 8 H(+)(in) = 4 Fe(III)-[cytochrome c] + 2 H2O + 4 H(+)(out). Component of the cytochrome c oxidase, the last enzyme in the mitochondrial electron transport chain which drives oxidative phosphorylation. The respiratory chain contains 3 multisubunit complexes succinate dehydrogenase (complex II, CII), ubiquinol-cytochrome c oxidoreductase (cytochrome b-c1 complex, complex III, CIII) and cytochrome c oxidase (complex IV, CIV), that cooperate to transfer electrons derived from NADH and succinate to molecular oxygen, creating an electrochemical gradient over the inner membrane that drives transmembrane transport and the ATP synthase. Cytochrome c oxidase is the component of the respiratory chain that catalyzes the reduction of oxygen to water. Electrons originating from reduced cytochrome c in the intermembrane space (IMS) are transferred via the dinuclear copper A center (CU(A)) of subunit 2 and heme A of subunit 1 to the active site in subunit 1, a binuclear center (BNC) formed by heme A3 and copper B (CU(B)). The BNC reduces molecular oxygen to 2 water molecules using 4 electrons from cytochrome c in the IMS and 4 protons from the mitochondrial matrix. The polypeptide is Cytochrome c oxidase subunit 2 (MT-CO2) (Bos indicus (Zebu)).